The sequence spans 199 residues: Small ribosomal subunit protein uS2 (199 aa).

The protein belongs to the universal ribosomal protein uS2 family.

This is Small ribosomal subunit protein uS2 (rps2) from Thermoplasma acidophilum (strain ATCC 25905 / DSM 1728 / JCM 9062 / NBRC 15155 / AMRC-C165).